Consider the following 203-residue polypeptide: Phosphatidylethanolamine N-methyltransferase (203 aa).

The enzyme catalyses a 1,2-diacyl-sn-glycero-3-phosphoethanolamine + S-adenosyl-L-methionine = a 1,2-diacyl-sn-glycero-3-phospho-N-methylethanolamine + S-adenosyl-L-homocysteine + H(+). The protein operates within phospholipid metabolism; phosphatidylcholine biosynthesis. Its function is as follows. This enzyme catalyzes three distinct methylation reactions for converting phosphatidylethanolamine to phosphatidylcholine. The chain is Phosphatidylethanolamine N-methyltransferase (pmtA) from Cereibacter sphaeroides (Rhodobacter sphaeroides).